Consider the following 200-residue polypeptide: ATP-dependent Clp protease proteolytic subunit (200 aa).

The active-site Nucleophile is the Ser-98. His-123 is an active-site residue.

The protein belongs to the peptidase S14 family. In terms of assembly, fourteen ClpP subunits assemble into 2 heptameric rings which stack back to back to give a disk-like structure with a central cavity, resembling the structure of eukaryotic proteasomes.

Its subcellular location is the cytoplasm. It carries out the reaction Hydrolysis of proteins to small peptides in the presence of ATP and magnesium. alpha-casein is the usual test substrate. In the absence of ATP, only oligopeptides shorter than five residues are hydrolyzed (such as succinyl-Leu-Tyr-|-NHMec, and Leu-Tyr-Leu-|-Tyr-Trp, in which cleavage of the -Tyr-|-Leu- and -Tyr-|-Trp bonds also occurs).. Its function is as follows. Cleaves peptides in various proteins in a process that requires ATP hydrolysis. Has a chymotrypsin-like activity. Plays a major role in the degradation of misfolded proteins. The chain is ATP-dependent Clp protease proteolytic subunit from Ehrlichia canis (strain Jake).